The sequence spans 479 residues: Poly(A) polymerase catalytic subunit (479 aa).

Catalysis depends on residues Asp202 and Asp204. Ca(2+) is bound by residues Asp202, Asp204, and Asp253.

This sequence belongs to the poxviridae poly(A) polymerase catalytic subunit family. Heterodimer of a large (catalytic) subunit and a small (regulatory) subunit.

The enzyme catalyses RNA(n) + ATP = RNA(n)-3'-adenine ribonucleotide + diphosphate. Polymerase that creates the 3'-poly(A) tail of mRNA's. This chain is Poly(A) polymerase catalytic subunit (OPG063), found in Camelus.